The chain runs to 447 residues: MITIKKGLDLPIAGKPAQVIHSGNAVNQVAILGEEYVGMRPSMKVREGDVVKKGQVLFEDKKNPGVIFTAPASGTITAINRGEKRVLQSVVINVEGDEKITFAKYSTEQLNTLSSEQVKQNLIESGLWTALRTRPFSKVPSIESEASSLFVNAMDTNPLAADPSVVLKEYSQDFTNGLTVLSRLFPSKPLHLCKAGDSNIPTTDLENLQIHDFTGVHPAGLVGTHIHFIDPVGIQKTVWHINYQDVIAVGKLFTTGELYSERVISLAGPQVKEPRLVRTIIGVNLSQLTQNELSAGKNRVISGSVLCGQIAKDSHDYLGRYALQVSVIAEGNEKEFFGWIMPQANKYSVTRTVLGHFSKKLFNFTTSENGGERAMVPIGSYERVMPLDILPTLLLRDLIVGDTDGAQELGCLELDEEDLALCSFVCPGKYEYGSILRQVLDKIEKEG.

The protein belongs to the NqrA family. Composed of six subunits; NqrA, NqrB, NqrC, NqrD, NqrE and NqrF.

The catalysed reaction is a ubiquinone + n Na(+)(in) + NADH + H(+) = a ubiquinol + n Na(+)(out) + NAD(+). NQR complex catalyzes the reduction of ubiquinone-1 to ubiquinol by two successive reactions, coupled with the transport of Na(+) ions from the cytoplasm to the periplasm. NqrA to NqrE are probably involved in the second step, the conversion of ubisemiquinone to ubiquinol. This chain is Na(+)-translocating NADH-quinone reductase subunit A, found in Haemophilus influenzae (strain PittEE).